Here is a 454-residue protein sequence, read N- to C-terminus: Bifunctional protein GlmU (454 aa).

The tract at residues 1 to 231 (MSRPTVSLIV…EAETLGVNTR (231 aa)) is pyrophosphorylase. UDP-N-acetyl-alpha-D-glucosamine is bound by residues 11-14 (LAAG), lysine 25, glutamine 78, 83-84 (GT), 106-108 (YGD), glycine 143, glutamate 157, asparagine 172, and asparagine 229. Aspartate 108 is a binding site for Mg(2+). Asparagine 229 contributes to the Mg(2+) binding site. The segment at 232–252 (AQLAAAEAEFQRRARAAALED) is linker. An N-acetyltransferase region spans residues 253 to 454 (GVTLTAPDTV…ARDASKKGTN (202 aa)). Residues arginine 318 and lysine 336 each coordinate UDP-N-acetyl-alpha-D-glucosamine. The active-site Proton acceptor is the histidine 348. 2 residues coordinate UDP-N-acetyl-alpha-D-glucosamine: tyrosine 351 and asparagine 362. Residues alanine 365, 371–372 (NY), serine 390, serine 408, and arginine 425 each bind acetyl-CoA.

In the N-terminal section; belongs to the N-acetylglucosamine-1-phosphate uridyltransferase family. This sequence in the C-terminal section; belongs to the transferase hexapeptide repeat family. In terms of assembly, homotrimer. The cofactor is Mg(2+).

Its subcellular location is the cytoplasm. It catalyses the reaction alpha-D-glucosamine 1-phosphate + acetyl-CoA = N-acetyl-alpha-D-glucosamine 1-phosphate + CoA + H(+). The enzyme catalyses N-acetyl-alpha-D-glucosamine 1-phosphate + UTP + H(+) = UDP-N-acetyl-alpha-D-glucosamine + diphosphate. It participates in nucleotide-sugar biosynthesis; UDP-N-acetyl-alpha-D-glucosamine biosynthesis; N-acetyl-alpha-D-glucosamine 1-phosphate from alpha-D-glucosamine 6-phosphate (route II): step 2/2. It functions in the pathway nucleotide-sugar biosynthesis; UDP-N-acetyl-alpha-D-glucosamine biosynthesis; UDP-N-acetyl-alpha-D-glucosamine from N-acetyl-alpha-D-glucosamine 1-phosphate: step 1/1. The protein operates within bacterial outer membrane biogenesis; LPS lipid A biosynthesis. In terms of biological role, catalyzes the last two sequential reactions in the de novo biosynthetic pathway for UDP-N-acetylglucosamine (UDP-GlcNAc). The C-terminal domain catalyzes the transfer of acetyl group from acetyl coenzyme A to glucosamine-1-phosphate (GlcN-1-P) to produce N-acetylglucosamine-1-phosphate (GlcNAc-1-P), which is converted into UDP-GlcNAc by the transfer of uridine 5-monophosphate (from uridine 5-triphosphate), a reaction catalyzed by the N-terminal domain. The protein is Bifunctional protein GlmU of Cereibacter sphaeroides (strain ATCC 17025 / ATH 2.4.3) (Rhodobacter sphaeroides).